The primary structure comprises 526 residues: Histone-lysine N-methyltransferase SET5 (526 aa).

In terms of domain architecture, SET spans 112–403 (AKVEVKFIDD…KGEQIRITYV (292 aa)). A disordered region spans residues 450–492 (NLGVEKIDSNDNSEDGSKKSTGNRKSSMREAQPDLKEILKNGK). Over residues 476 to 492 (SMREAQPDLKEILKNGK) the composition is skewed to basic and acidic residues. Ser-517 is subject to Phosphoserine.

Belongs to the class V-like SAM-binding methyltransferase superfamily. Histone-lysine methyltransferase family. SET5 subfamily.

The protein resides in the nucleus. The protein localises to the chromosome. It localises to the cytoplasm. The enzyme catalyses L-lysyl-[histone] + S-adenosyl-L-methionine = N(6)-methyl-L-lysyl-[histone] + S-adenosyl-L-homocysteine + H(+). Its function is as follows. Histone methyltransferase that monomethylates 'Lys-5', 'Lys-8' and 'Lys-12' of histone H4 (H4K5me1, H4K8me1 and H4K12me1, respectively), thereby controlling gene expression and remodeling chromatin structures. This chain is Histone-lysine N-methyltransferase SET5 (SET5), found in Saccharomyces cerevisiae (strain YJM789) (Baker's yeast).